The chain runs to 314 residues: Ribosomal RNA large subunit methyltransferase F (314 aa).

This sequence belongs to the methyltransferase superfamily. METTL16/RlmF family.

It is found in the cytoplasm. The catalysed reaction is adenosine(1618) in 23S rRNA + S-adenosyl-L-methionine = N(6)-methyladenosine(1618) in 23S rRNA + S-adenosyl-L-homocysteine + H(+). Specifically methylates the adenine in position 1618 of 23S rRNA. The protein is Ribosomal RNA large subunit methyltransferase F of Flavobacterium psychrophilum (strain ATCC 49511 / DSM 21280 / CIP 103535 / JIP02/86).